We begin with the raw amino-acid sequence, 139 residues long: uncharacterized protein (139 aa).

Residues 8–63 enclose the HTH cro/C1-type domain; that stretch reads LRELRRARKLTVNQLAVYSGISSATISKIENGKRGTPKPATIKKLAAVLKVPYENL. The segment at residues 19–38 is a DNA-binding region (H-T-H motif); sequence VNQLAVYSGISSATISKIEN.

This is an uncharacterized protein from Bacillus subtilis (strain 168).